The primary structure comprises 162 residues: Ecotin (162 aa).

An N-terminal signal peptide occupies residues 1 to 18 (MKMFVPAVVFAASASAWA). Residues Cys70 and Cys107 are joined by a disulfide bond.

The protein belongs to the protease inhibitor I11 (ecotin) family. In terms of assembly, homodimer.

Its subcellular location is the periplasm. Functionally, general inhibitor of pancreatic serine proteases: inhibits chymotrypsin, trypsin, elastases, factor X, kallikrein as well as a variety of other proteases. The sequence is that of Ecotin from Salmonella arizonae (strain ATCC BAA-731 / CDC346-86 / RSK2980).